The primary structure comprises 215 residues: Pyrrolidone-carboxylate peptidase (215 aa).

Residues E78, C141, and H165 contribute to the active site.

Belongs to the peptidase C15 family. As to quaternary structure, homotetramer.

It is found in the cytoplasm. It catalyses the reaction Release of an N-terminal pyroglutamyl group from a polypeptide, the second amino acid generally not being Pro.. Functionally, removes 5-oxoproline from various penultimate amino acid residues except L-proline. This Streptococcus suis (strain 98HAH33) protein is Pyrrolidone-carboxylate peptidase.